The primary structure comprises 593 residues: tRNA (guanine(26)-N(2))-dimethyltransferase 1 (593 aa).

Residues 9–465 enclose the Trm1 methyltransferase domain; the sequence is TVIKEGEAEV…APMEIIWDIM (457 aa). Arg36 is a binding site for S-adenosyl-L-methionine. A disordered region spans residues 56–118; it reads AMLSKRARSS…KTAYESARRE (63 aa). Basic and acidic residues-rich tracts occupy residues 68 to 81 and 88 to 118; these read VVEK…KEET and DNGK…ARRE. The S-adenosyl-L-methionine site is built by Arg134, Asp152, and Val185. Residues Cys315, Cys318, Cys350, and Cys353 each contribute to the Zn(2+) site. A disordered region spans residues 546–593; that stretch reads VNGHLNNNHKEAGDEEEEEEEEEPEEDIIEGEPELKRQKTTEDFASTS. Residues 558 to 577 show a composition bias toward acidic residues; the sequence is GDEEEEEEEEEPEEDIIEGE. Basic and acidic residues predominate over residues 578–587; sequence PELKRQKTTE.

Belongs to the class I-like SAM-binding methyltransferase superfamily. Trm1 family.

The catalysed reaction is guanosine(26) in tRNA + 2 S-adenosyl-L-methionine = N(2)-dimethylguanosine(26) in tRNA + 2 S-adenosyl-L-homocysteine + 2 H(+). Its function is as follows. Dimethylates a single guanine residue at position 26 of most tRNAs using S-adenosyl-L-methionine as donor of the methyl groups. The polypeptide is tRNA (guanine(26)-N(2))-dimethyltransferase 1 (Arabidopsis thaliana (Mouse-ear cress)).